A 464-amino-acid polypeptide reads, in one-letter code: Glutamate--tRNA ligase (464 aa).

Positions P9–G19 match the 'HIGH' region motif. The 'KMSKS' region motif lies at K242 to R246. K245 serves as a coordination point for ATP.

This sequence belongs to the class-I aminoacyl-tRNA synthetase family. Glutamate--tRNA ligase type 1 subfamily. In terms of assembly, monomer.

It is found in the cytoplasm. The catalysed reaction is tRNA(Glu) + L-glutamate + ATP = L-glutamyl-tRNA(Glu) + AMP + diphosphate. Its function is as follows. Catalyzes the attachment of glutamate to tRNA(Glu) in a two-step reaction: glutamate is first activated by ATP to form Glu-AMP and then transferred to the acceptor end of tRNA(Glu). The polypeptide is Glutamate--tRNA ligase (Neisseria gonorrhoeae (strain NCCP11945)).